Here is a 196-residue protein sequence, read N- to C-terminus: Imidazole glycerol phosphate synthase subunit HisH (196 aa).

The region spanning 2-196 (KVAVVKYNAG…ERVLRNFLDL (195 aa)) is the Glutamine amidotransferase type-1 domain. Cys-77 functions as the Nucleophile in the catalytic mechanism. Catalysis depends on residues His-178 and Glu-180.

As to quaternary structure, heterodimer of HisH and HisF.

Its subcellular location is the cytoplasm. The enzyme catalyses 5-[(5-phospho-1-deoxy-D-ribulos-1-ylimino)methylamino]-1-(5-phospho-beta-D-ribosyl)imidazole-4-carboxamide + L-glutamine = D-erythro-1-(imidazol-4-yl)glycerol 3-phosphate + 5-amino-1-(5-phospho-beta-D-ribosyl)imidazole-4-carboxamide + L-glutamate + H(+). It carries out the reaction L-glutamine + H2O = L-glutamate + NH4(+). The protein operates within amino-acid biosynthesis; L-histidine biosynthesis; L-histidine from 5-phospho-alpha-D-ribose 1-diphosphate: step 5/9. IGPS catalyzes the conversion of PRFAR and glutamine to IGP, AICAR and glutamate. The HisH subunit catalyzes the hydrolysis of glutamine to glutamate and ammonia as part of the synthesis of IGP and AICAR. The resulting ammonia molecule is channeled to the active site of HisF. The chain is Imidazole glycerol phosphate synthase subunit HisH from Bacteroides thetaiotaomicron (strain ATCC 29148 / DSM 2079 / JCM 5827 / CCUG 10774 / NCTC 10582 / VPI-5482 / E50).